Here is a 957-residue protein sequence, read N- to C-terminus: Glycine dehydrogenase (decarboxylating) (957 aa).

Lys-708 bears the N6-(pyridoxal phosphate)lysine mark.

It belongs to the GcvP family. The glycine cleavage system is composed of four proteins: P, T, L and H. The cofactor is pyridoxal 5'-phosphate.

The catalysed reaction is N(6)-[(R)-lipoyl]-L-lysyl-[glycine-cleavage complex H protein] + glycine + H(+) = N(6)-[(R)-S(8)-aminomethyldihydrolipoyl]-L-lysyl-[glycine-cleavage complex H protein] + CO2. Functionally, the glycine cleavage system catalyzes the degradation of glycine. The P protein binds the alpha-amino group of glycine through its pyridoxal phosphate cofactor; CO(2) is released and the remaining methylamine moiety is then transferred to the lipoamide cofactor of the H protein. The chain is Glycine dehydrogenase (decarboxylating) from Salmonella agona (strain SL483).